A 341-amino-acid polypeptide reads, in one-letter code: MTEMFYDDDADLSIIQGRKVAIVGYGSQGHAHALNLRDSGVEVTIALKEGSSSIAKAQDAGFTVKNVADAAEWADVIMILAPDQHQRSIYNDSIKDKLTPGKALAFAHGFNIRFGYIKAPEGVDVILIAPKAPGHTVRREFEAGRGIPDIIAVEQDATGAAWDLAKSYAKAIGGTRAGVIKTTFTEETETDLFGEQAVLCGGVSQLVQYGFETLTEAGYQPQIAYFEVLHELKLIVDLMWEGGIAKQRWSVSDTAEYGDYVSGPRVITPEVKENMKAVLADIQNGAFAKRFIEDQDNGGVEFKALRAKAEQHPIESVGRELRGLFSWQQQDEDYVEGSAAR.

The KARI N-terminal Rossmann domain maps to 1 to 182 (MTEMFYDDDA…GGTRAGVIKT (182 aa)). Residues 25 to 28 (YGSQ), lysine 48, serine 51, serine 53, and 83 to 86 (DQHQ) each bind NADP(+). Residue histidine 108 is part of the active site. An NADP(+)-binding site is contributed by glycine 134. The KARI C-terminal knotted domain occupies 183-328 (TFTEETETDL…RELRGLFSWQ (146 aa)). Aspartate 191, glutamate 195, glutamate 227, and glutamate 231 together coordinate Mg(2+). A substrate-binding site is contributed by serine 252.

It belongs to the ketol-acid reductoisomerase family. Mg(2+) is required as a cofactor.

The enzyme catalyses (2R)-2,3-dihydroxy-3-methylbutanoate + NADP(+) = (2S)-2-acetolactate + NADPH + H(+). It carries out the reaction (2R,3R)-2,3-dihydroxy-3-methylpentanoate + NADP(+) = (S)-2-ethyl-2-hydroxy-3-oxobutanoate + NADPH + H(+). Its pathway is amino-acid biosynthesis; L-isoleucine biosynthesis; L-isoleucine from 2-oxobutanoate: step 2/4. The protein operates within amino-acid biosynthesis; L-valine biosynthesis; L-valine from pyruvate: step 2/4. In terms of biological role, involved in the biosynthesis of branched-chain amino acids (BCAA). Catalyzes an alkyl-migration followed by a ketol-acid reduction of (S)-2-acetolactate (S2AL) to yield (R)-2,3-dihydroxy-isovalerate. In the isomerase reaction, S2AL is rearranged via a Mg-dependent methyl migration to produce 3-hydroxy-3-methyl-2-ketobutyrate (HMKB). In the reductase reaction, this 2-ketoacid undergoes a metal-dependent reduction by NADPH to yield (R)-2,3-dihydroxy-isovalerate. This is Ketol-acid reductoisomerase (NADP(+)) from Arthrobacter sp. (strain FB24).